The chain runs to 298 residues: ATP synthase gamma chain (298 aa).

Belongs to the ATPase gamma chain family. As to quaternary structure, F-type ATPases have 2 components, CF(1) - the catalytic core - and CF(0) - the membrane proton channel. CF(1) has five subunits: alpha(3), beta(3), gamma(1), delta(1), epsilon(1). CF(0) has three main subunits: a, b and c.

It is found in the cell inner membrane. Its function is as follows. Produces ATP from ADP in the presence of a proton gradient across the membrane. The gamma chain is believed to be important in regulating ATPase activity and the flow of protons through the CF(0) complex. The polypeptide is ATP synthase gamma chain (Zymomonas mobilis subsp. mobilis (strain ATCC 31821 / ZM4 / CP4)).